Consider the following 209-residue polypeptide: Large ribosomal subunit protein uL3 (209 aa).

The disordered stretch occupies residues 118-152 (GFQGAIKRHGQSRGPMSHGSRYHRRPGSMGPVDPN).

This sequence belongs to the universal ribosomal protein uL3 family. As to quaternary structure, part of the 50S ribosomal subunit. Forms a cluster with proteins L14 and L19.

Functionally, one of the primary rRNA binding proteins, it binds directly near the 3'-end of the 23S rRNA, where it nucleates assembly of the 50S subunit. This is Large ribosomal subunit protein uL3 from Bacillus licheniformis (strain ATCC 14580 / DSM 13 / JCM 2505 / CCUG 7422 / NBRC 12200 / NCIMB 9375 / NCTC 10341 / NRRL NRS-1264 / Gibson 46).